Here is a 450-residue protein sequence, read N- to C-terminus: tRNA modification GTPase MnmE (450 aa).

(6S)-5-formyl-5,6,7,8-tetrahydrofolate contacts are provided by arginine 23, glutamate 80, and arginine 123. The TrmE-type G domain occupies 219-372 (GLHVVLAGKP…LRQRLLQLAG (154 aa)). Asparagine 229 is a K(+) binding site. Residues 229 to 234 (NVGKSS), 248 to 254 (TPIAGTT), 273 to 276 (DTAG), and 353 to 355 (SAR) each bind GTP. Residue serine 233 participates in Mg(2+) binding. The K(+) site is built by threonine 248, isoleucine 250, and threonine 253. Mg(2+) is bound at residue threonine 254. A (6S)-5-formyl-5,6,7,8-tetrahydrofolate-binding site is contributed by lysine 450.

Belongs to the TRAFAC class TrmE-Era-EngA-EngB-Septin-like GTPase superfamily. TrmE GTPase family. As to quaternary structure, homodimer. Heterotetramer of two MnmE and two MnmG subunits. K(+) serves as cofactor.

Its subcellular location is the cytoplasm. Exhibits a very high intrinsic GTPase hydrolysis rate. Involved in the addition of a carboxymethylaminomethyl (cmnm) group at the wobble position (U34) of certain tRNAs, forming tRNA-cmnm(5)s(2)U34. This chain is tRNA modification GTPase MnmE, found in Bordetella bronchiseptica (strain ATCC BAA-588 / NCTC 13252 / RB50) (Alcaligenes bronchisepticus).